Consider the following 312-residue polypeptide: MTQAAEHITVLLHEAVEGLAIKPDGIYVDGTFGRGGHSRLILQHLGPNGRLIAIDRDPQAIAEAAKIQDPRFEIVHGPFSGIVSYLDERGLLGKVDGFLLDLGVSSPQLDDAERGFSFMKDGPLDMRMDPTSGQSAAQWLARADVDDIAWVLKTFGEERFAKKIARAIVHDRVTEPYVRTRQLAEMIARVNPSKEKGKHAATRSFQAIRIYINSELDEIETALNGALQALAPEGRLSVISFHSLEDRLVKHFIRKHEKGPEVPRGIPLTEAQLAGGRKLKSVGKALKPSEHEVTENSRSRSSVLRVAQRLAE.

Residues Gly35–His37, Asp55, Asp101, and Gln108 contribute to the S-adenosyl-L-methionine site. A disordered region spans residues Ala285–Val306. Basic and acidic residues predominate over residues Lys287–Arg298.

The protein belongs to the methyltransferase superfamily. RsmH family.

Its subcellular location is the cytoplasm. It carries out the reaction cytidine(1402) in 16S rRNA + S-adenosyl-L-methionine = N(4)-methylcytidine(1402) in 16S rRNA + S-adenosyl-L-homocysteine + H(+). Functionally, specifically methylates the N4 position of cytidine in position 1402 (C1402) of 16S rRNA. In Aeromonas salmonicida (strain A449), this protein is Ribosomal RNA small subunit methyltransferase H.